A 201-amino-acid polypeptide reads, in one-letter code: Dephospho-CoA kinase (201 aa).

The 198-residue stretch at 4 to 201 (SVGLTGNIAS…KYLREAKIKQ (198 aa)) folds into the DPCK domain. 12-17 (ASGKST) is a binding site for ATP.

Belongs to the CoaE family.

The protein localises to the cytoplasm. It catalyses the reaction 3'-dephospho-CoA + ATP = ADP + CoA + H(+). Its pathway is cofactor biosynthesis; coenzyme A biosynthesis; CoA from (R)-pantothenate: step 5/5. Functionally, catalyzes the phosphorylation of the 3'-hydroxyl group of dephosphocoenzyme A to form coenzyme A. The chain is Dephospho-CoA kinase from Legionella pneumophila subsp. pneumophila (strain Philadelphia 1 / ATCC 33152 / DSM 7513).